A 363-amino-acid polypeptide reads, in one-letter code: Uptake hydrogenase small subunit (363 aa).

Positions 1–46 (MGAATETFYSVIRRQGITRRSFHKFCSLTATSLGLGPLAASRIANA) form a signal peptide, tat-type signal. [4Fe-4S] cluster-binding residues include Cys-63, Cys-66, Cys-161, Cys-195, His-233, Cys-236, Cys-261, and Cys-267. The [3Fe-4S] cluster site is built by Cys-276, Cys-295, and Cys-298.

This sequence belongs to the [NiFe]/[NiFeSe] hydrogenase small subunit family. In terms of assembly, heterodimer of a large and a small subunit. [4Fe-4S] cluster is required as a cofactor. It depends on [3Fe-4S] cluster as a cofactor. Post-translationally, predicted to be exported by the Tat system. The position of the signal peptide cleavage has not been experimentally proven.

The protein localises to the cell membrane. The catalysed reaction is H2 + A = AH2. In terms of biological role, this enzyme recycles the H(2) produced by nitrogenase to increase the production of ATP and to protect nitrogenase against inhibition or damage by O(2) under carbon- or phosphate-limited conditions. The chain is Uptake hydrogenase small subunit (hupA) from Bradyrhizobium diazoefficiens (strain JCM 10833 / BCRC 13528 / IAM 13628 / NBRC 14792 / USDA 110).